The chain runs to 280 residues: MGAWISRTRVPTPEPDPQEVLDLSRLPPELLLLVLSHVPPRTLLMHCRRVCRAWRALVDGQALWLLLLARDHSAAGRALLTLARRCLPPAHEDTPCPLGQFCALRPLGRNLISNPCGQEGLRKWMVRHGGDGWVVEKNRKPVPGAPSQTCFVTSFSWCRKKQVVDLVEKGLWPELLDSGGVEIAVSDWWGARHDSGCKYRLFVTLLDAHQNVIDKFSAVPDPIEQWNNDIYLQVTHVFSGIRRGIRFVSFEHWGQDTQFWAGHYGARVTNSSVIIRVCQS.

An F-box domain is found at 20-67 (VLDLSRLPPELLLLVLSHVPPRTLLMHCRRVCRAWRALVDGQALWLLL). The FBA domain maps to 101-277 (FCALRPLGRN…VTNSSVIIRV (177 aa)).

As to quaternary structure, part of a SCF (SKP1-cullin-F-box) protein ligase complex. Interacts with SKP1 and CUL1. Detected in brain, heart and muscle.

Substrate-recognition component of the SCF (SKP1-CUL1-F-box protein)-type E3 ubiquitin ligase complex. Able to recognize and bind complex-type oligosaccharides. The polypeptide is F-box only protein 27 (Fbxo27) (Mus musculus (Mouse)).